Consider the following 392-residue polypeptide: Leucine-rich repeat-containing protein 74B (392 aa).

A disordered region spans residues 24 to 46; the sequence is RLSGVPEAEQGPEANWDSDLETE. LRR repeat units follow at residues 106-129, 134-157, 162-185, 192-213, 220-241, 248-269, 276-297, 304-325, and 334-356; these read NPYV…ALAG, SSSI…ALCA, NQAM…HLAE, DLKS…TLGP, GLTE…AFAR, FLKV…AVGE, VLEE…SLGL, TLRI…GLLK, and ALEL…ASSV.

This chain is Leucine-rich repeat-containing protein 74B, found in Homo sapiens (Human).